We begin with the raw amino-acid sequence, 860 residues long: MFMSTDEVRRAFLSFFESKGHQIVESSSLVPANDPTLLFTNAGMNQFKDCFLGLEKRAYTRATTAQRCVRAGGKHNDLENVGFTARHHTFFEMLGNFSFGDYFKEDAIQYAWEFLTDVLQLPKERLLVTVYETDDEAFDIWNKKVGIPADRIIRIGDKKGGKKFDSDNFWQMGDTGPCGPCTEIFYDHGDHIWGGPPGSPEEDGDRFIEIWNNVFMQFNRHADGTMEPLPKPSVDTGMGIERISAIMQGVHSNYEIDVFQTLIKAAADAIGYQDLTNQSLRVVADHIRSCAFLIVDGVMPSNEGRGYVLRRIIRRAVRHGNKLGAQGAFFHKLVGPLAEVMGTAGVELKKQQALVEKVLRIEEENFGRTLDRGMSILNDALDQLSGQVLDGETVFKLYDTYGFPADLTNDVARERGFSIDEAGFEQAMEEQRQRAREAGQFGTDYNSLIKSATNTEFCGYTASRGQSVVREMFVEGAEVSTLSAGDKAIIVLDNTPFYAESGGQCGDTGVLKTDAGIFHVEDTQKLGNAIAHHGVLAQGVLATGDQVDAIVDEKRRAAISLNHSATHLLHAALRKVLGEHVAQKGSLVRAETLRFDFSHLEAMTAAEIKEVERLVNQEVRRNHSIETNIMNIDEAKAKGAMALFGEKYDDQVRVLSMGDFSTELCGGIHASNTGDIGLFKIISEGGIAAGIRRIEAVTGEGALDYLDAQQAQHDAKVSEMAAKAKLLEKEIQQLKDKLAAKESAGLINQVKQIAGVNVLVAQLNGADNKALRGMVDDLKNQLSSGIIMLGNVAEGKVGLIAGVTNDLTNKVKAGELVNMVALQVGGKGGGRPDMAQAGGTDAHALPSALESVDAWIAERL.

Residues His563, His567, Cys665, and His669 each coordinate Zn(2+).

Belongs to the class-II aminoacyl-tRNA synthetase family. Requires Zn(2+) as cofactor.

The protein localises to the cytoplasm. It catalyses the reaction tRNA(Ala) + L-alanine + ATP = L-alanyl-tRNA(Ala) + AMP + diphosphate. In terms of biological role, catalyzes the attachment of alanine to tRNA(Ala) in a two-step reaction: alanine is first activated by ATP to form Ala-AMP and then transferred to the acceptor end of tRNA(Ala). Also edits incorrectly charged Ser-tRNA(Ala) and Gly-tRNA(Ala) via its editing domain. This is Alanine--tRNA ligase from Vibrio cholerae serotype O1 (strain ATCC 39541 / Classical Ogawa 395 / O395).